Consider the following 214-residue polypeptide: NADH-ubiquinone oxidoreductase chain 5 (214 aa).

4 helical membrane-spanning segments follow: residues 14–34 (LNTW…TYSI), 58–78 (PLIT…GMII), 92–112 (MPLI…ILAL), and 192–212 (TGLI…MILM).

Belongs to the complex I subunit 5 family.

It is found in the mitochondrion inner membrane. The enzyme catalyses a ubiquinone + NADH + 5 H(+)(in) = a ubiquinol + NAD(+) + 4 H(+)(out). In terms of biological role, core subunit of the mitochondrial membrane respiratory chain NADH dehydrogenase (Complex I) that is believed to belong to the minimal assembly required for catalysis. Complex I functions in the transfer of electrons from NADH to the respiratory chain. The immediate electron acceptor for the enzyme is believed to be ubiquinone. The polypeptide is NADH-ubiquinone oxidoreductase chain 5 (MT-ND5) (Anser caerulescens (Snow goose)).